We begin with the raw amino-acid sequence, 72 residues long: Toxin Acra II-1 (72 aa).

In terms of domain architecture, LCN-type CS-alpha/beta spans V3–K67. 3 cysteine pairs are disulfide-bonded: C18/C41, C27/C46, and C31/C48.

The protein belongs to the long (3 C-C) scorpion toxin superfamily. Sodium channel inhibitor family. Beta subfamily. As to expression, expressed by the venom gland.

It localises to the secreted. In terms of biological role, binds to sodium channels (Nav) and affects the channel activation process. The sequence is that of Toxin Acra II-1 from Androctonus crassicauda (Arabian fat-tailed scorpion).